The following is a 251-amino-acid chain: Triosephosphate isomerase (251 aa).

9-11 (NWK) is a substrate binding site. The active-site Electrophile is the His-95. The Proton acceptor role is filled by Glu-167. Residues Gly-173, Ser-213, and 234-235 (GG) contribute to the substrate site. Ser-213 is subject to Phosphoserine.

This sequence belongs to the triosephosphate isomerase family. Homodimer.

Its subcellular location is the cytoplasm. The catalysed reaction is D-glyceraldehyde 3-phosphate = dihydroxyacetone phosphate. Its pathway is carbohydrate biosynthesis; gluconeogenesis. The protein operates within carbohydrate degradation; glycolysis; D-glyceraldehyde 3-phosphate from glycerone phosphate: step 1/1. Involved in the gluconeogenesis. Catalyzes stereospecifically the conversion of dihydroxyacetone phosphate (DHAP) to D-glyceraldehyde-3-phosphate (G3P). The sequence is that of Triosephosphate isomerase from Bacillus cereus (strain AH820).